The chain runs to 474 residues: Cysteine--tRNA ligase (474 aa).

Residue cysteine 27 coordinates Zn(2+). Residues 29–39 (PTVYNYIHIGN) carry the 'HIGH' region motif. Positions 212, 237, and 241 each coordinate Zn(2+). A 'KMSKS' region motif is present at residues 271-275 (KMSKS). Residue lysine 274 coordinates ATP.

This sequence belongs to the class-I aminoacyl-tRNA synthetase family. As to quaternary structure, monomer. Zn(2+) is required as a cofactor.

Its subcellular location is the cytoplasm. It carries out the reaction tRNA(Cys) + L-cysteine + ATP = L-cysteinyl-tRNA(Cys) + AMP + diphosphate. The chain is Cysteine--tRNA ligase from Lactobacillus delbrueckii subsp. bulgaricus (strain ATCC 11842 / DSM 20081 / BCRC 10696 / JCM 1002 / NBRC 13953 / NCIMB 11778 / NCTC 12712 / WDCM 00102 / Lb 14).